Here is a 212-residue protein sequence, read N- to C-terminus: UPF0319 protein PBPRA2789 (212 aa).

Residues 1–21 (MKKILLAFTLPLVLASQTAMA) form the signal peptide.

The protein belongs to the UPF0319 family.

The polypeptide is UPF0319 protein PBPRA2789 (Photobacterium profundum (strain SS9)).